Consider the following 346-residue polypeptide: Phosphoribosylformylglycinamidine cyclo-ligase (346 aa).

This sequence belongs to the AIR synthase family.

The protein resides in the cytoplasm. The catalysed reaction is 2-formamido-N(1)-(5-O-phospho-beta-D-ribosyl)acetamidine + ATP = 5-amino-1-(5-phospho-beta-D-ribosyl)imidazole + ADP + phosphate + H(+). The protein operates within purine metabolism; IMP biosynthesis via de novo pathway; 5-amino-1-(5-phospho-D-ribosyl)imidazole from N(2)-formyl-N(1)-(5-phospho-D-ribosyl)glycinamide: step 2/2. This is Phosphoribosylformylglycinamidine cyclo-ligase from Aliivibrio fischeri (strain ATCC 700601 / ES114) (Vibrio fischeri).